Consider the following 362-residue polypeptide: DNA replication and repair protein RecF (362 aa).

Position 30–37 (30–37 (GPNGSGKT)) interacts with ATP.

The protein belongs to the RecF family.

It localises to the cytoplasm. Its function is as follows. The RecF protein is involved in DNA metabolism; it is required for DNA replication and normal SOS inducibility. RecF binds preferentially to single-stranded, linear DNA. It also seems to bind ATP. The chain is DNA replication and repair protein RecF from Proteus mirabilis (strain HI4320).